A 208-amino-acid chain; its full sequence is 3,4-dihydroxy-2-butanone 4-phosphate synthase (208 aa).

Thr3 bears the Phosphothreonine mark. Glu27 serves as a coordination point for Mg(2+). Asp31 is a binding site for D-ribulose 5-phosphate. Cys56 carries the S-glutathionyl cysteine; by GRX2 modification. D-ribulose 5-phosphate contacts are provided by residues Thr88 and 145 to 149 (RRGHT). A Mg(2+)-binding site is contributed by His148.

It belongs to the DHBP synthase family. In terms of assembly, homodimer. Requires Mg(2+) as cofactor. The cofactor is Mn(2+). S-glutathionylation of Cys-56 is reversible and dependent on the cytoplasmic isoform of glutaredoxin-2.

It localises to the cytoplasm. It is found in the nucleus. Its subcellular location is the mitochondrion intermembrane space. The enzyme catalyses D-ribulose 5-phosphate = (2S)-2-hydroxy-3-oxobutyl phosphate + formate + H(+). It participates in cofactor biosynthesis; riboflavin biosynthesis; 2-hydroxy-3-oxobutyl phosphate from D-ribulose 5-phosphate: step 1/1. In terms of biological role, catalyzes the conversion of D-ribulose 5-phosphate to formate and 3,4-dihydroxy-2-butanone 4-phosphate. Also has an unrelated function in expression of mitochondrial respiration. In Saccharomyces cerevisiae (strain ATCC 204508 / S288c) (Baker's yeast), this protein is 3,4-dihydroxy-2-butanone 4-phosphate synthase (RIB3).